We begin with the raw amino-acid sequence, 579 residues long: uncharacterized protein (579 aa).

A disordered region spans residues 1 to 100 (MSGRRRNHPG…APPCGPYPGE (100 aa)). Polar residues predominate over residues 80 to 90 (GQQQSEPQHNS). 11 helical membrane-spanning segments follow: residues 148–168 (FAVDSAMAVALANTLFFAAAS), 175–195 (VALYLLITIAPFAVIAPLIGP), 206–226 (VALATSFVLRTGLATLLIMNY), 228–248 (GATGSYPSMVLYPCALAMMVL), 279–299 (VFGLLGGTIAGGAIAAGVEFV), 303–323 (LFKLPGALFVVAAITISGALL), 378–398 (LWGNCTIKVMVGFLFLYPAFV), 407–427 (WVQLGMLGLIGTAAAIGNFAG), 448–468 (IAVTVLALAASVAGNLLMTTI), 504–524 (SESTLQLAWVLGGALGVMVYT), and 526–546 (LWVGFTAVSALLILGLAQTVV).

It to M.tuberculosis Rv0876c.

The protein resides in the cell membrane. This is an uncharacterized protein from Mycobacterium leprae (strain TN).